The sequence spans 596 residues: Uptake hydrogenase large subunit (596 aa).

Positions 75, 78, 575, and 578 each coordinate Ni(2+).

Belongs to the [NiFe]/[NiFeSe] hydrogenase large subunit family. As to quaternary structure, heterodimer of a large and a small subunit. It depends on Ni(2+) as a cofactor.

The protein resides in the cell membrane. The catalysed reaction is H2 + A = AH2. This enzyme recycles the H(2) produced by nitrogenase to increase the production of ATP and to protect nitrogenase against inhibition or damage by O(2) under carbon- or phosphate-limited conditions. In Bradyrhizobium diazoefficiens (strain JCM 10833 / BCRC 13528 / IAM 13628 / NBRC 14792 / USDA 110), this protein is Uptake hydrogenase large subunit (hupB).